Consider the following 302-residue polypeptide: Protein NEOXANTHIN-DEFICIENT 1 (302 aa).

Required for neoxanthin biosynthesis. Probably not involved directly in the enzymatic conversion of violaxanthin to neoxanthin. Is necessary but not sufficient for neoxanthin synthesis. The sequence is that of Protein NEOXANTHIN-DEFICIENT 1 from Oryza sativa subsp. japonica (Rice).